The primary structure comprises 276 residues: Src-like-adapter (276 aa).

Glycine 2 carries N-myristoyl glycine lipidation. The SH3 domain maps to 22-82 (LDSDFLAVLS…PGICVARVYH (61 aa)). The 92-residue stretch at 84-175 (WLFEGLGRDK…GLCCVLTTPC (92 aa)) folds into the SH2 domain. An SLA C-terminal region spans residues 212 to 276 (EGTENPLGVD…FFSSPPYFED (65 aa)). Serine 253 is modified (phosphoserine). Tyrosine 273 is modified (phosphotyrosine).

Interacts with EPHA2, VAV1, LCP2 and PDGFRB. Homodimer. Homodimerization and interaction with phosphorylated CBL occurs via its C-terminal domain. Interacts with phosphorylated proteins ZAP70, CD3Z, SYK and LAT via its SH2 domain. In terms of tissue distribution, expressed in lung and fetal brain. Weakly expressed in heart, adult brain, placenta, liver, skeletal muscle, kidney and pancreas.

The protein localises to the cytoplasm. Its subcellular location is the endosome. Adapter protein, which negatively regulates T-cell receptor (TCR) signaling. Inhibits T-cell antigen-receptor induced activation of nuclear factor of activated T-cells. Involved in the negative regulation of positive selection and mitosis of T-cells. May act by linking signaling proteins such as ZAP70 with CBL, leading to a CBL dependent degradation of signaling proteins. This Homo sapiens (Human) protein is Src-like-adapter (SLA).